A 332-amino-acid chain; its full sequence is Putative threonine dehydratase (332 aa).

Position 56 is an N6-(pyridoxal phosphate)lysine (K56).

It belongs to the serine/threonine dehydratase family. It depends on pyridoxal 5'-phosphate as a cofactor.

It catalyses the reaction L-threonine = 2-oxobutanoate + NH4(+). Its pathway is amino-acid biosynthesis; L-isoleucine biosynthesis; 2-oxobutanoate from L-threonine: step 1/1. In Sinorhizobium fredii (strain NBRC 101917 / NGR234), this protein is Putative threonine dehydratase.